A 548-amino-acid chain; its full sequence is Probable malate:quinone oxidoreductase (548 aa).

Residues 521 to 548 (DKPQAADSTPKPQLKPQPVQKEVADIAL) are disordered. The segment covering 530–541 (PKPQLKPQPVQK) has biased composition (low complexity).

It belongs to the MQO family. It depends on FAD as a cofactor.

The enzyme catalyses (S)-malate + a quinone = a quinol + oxaloacetate. It participates in carbohydrate metabolism; tricarboxylic acid cycle; oxaloacetate from (S)-malate (quinone route): step 1/1. This Escherichia coli O139:H28 (strain E24377A / ETEC) protein is Probable malate:quinone oxidoreductase.